Consider the following 119-residue polypeptide: UPF0231 protein YPTB0717 (119 aa).

The protein belongs to the UPF0231 family.

This Yersinia pseudotuberculosis serotype I (strain IP32953) protein is UPF0231 protein YPTB0717.